The primary structure comprises 194 residues: RNA polymerase II subunit A C-terminal domain phosphatase SSU72 like protein 6 (194 aa).

Belongs to the SSU72 phosphatase family.

Its subcellular location is the nucleus. It catalyses the reaction O-phospho-L-seryl-[protein] + H2O = L-seryl-[protein] + phosphate. It carries out the reaction O-phospho-L-threonyl-[protein] + H2O = L-threonyl-[protein] + phosphate. Its function is as follows. Protein phosphatase that catalyzes the dephosphorylation of the C-terminal domain of RNA polymerase II. Plays a role in RNA processing and termination. The protein is RNA polymerase II subunit A C-terminal domain phosphatase SSU72 like protein 6 of Homo sapiens (Human).